The following is a 179-amino-acid chain: Large ribosomal subunit protein uL5 (179 aa).

This sequence belongs to the universal ribosomal protein uL5 family. In terms of assembly, part of the 50S ribosomal subunit; part of the 5S rRNA/L5/L18/L25 subcomplex. Contacts the 5S rRNA and the P site tRNA. Forms a bridge to the 30S subunit in the 70S ribosome.

Functionally, this is one of the proteins that bind and probably mediate the attachment of the 5S RNA into the large ribosomal subunit, where it forms part of the central protuberance. In the 70S ribosome it contacts protein S13 of the 30S subunit (bridge B1b), connecting the 2 subunits; this bridge is implicated in subunit movement. Contacts the P site tRNA; the 5S rRNA and some of its associated proteins might help stabilize positioning of ribosome-bound tRNAs. The protein is Large ribosomal subunit protein uL5 of Bacillus cereus (strain Q1).